Here is a 102-residue protein sequence, read N- to C-terminus: NADH-quinone oxidoreductase subunit K (102 aa).

The next 3 membrane-spanning stretches (helical) occupy residues Ile-5 to Leu-25, Ile-31 to Phe-51, and Phe-66 to Phe-86.

This sequence belongs to the complex I subunit 4L family. NDH-1 is composed of 14 different subunits. Subunits NuoA, H, J, K, L, M, N constitute the membrane sector of the complex.

It is found in the cell inner membrane. The catalysed reaction is a quinone + NADH + 5 H(+)(in) = a quinol + NAD(+) + 4 H(+)(out). Its function is as follows. NDH-1 shuttles electrons from NADH, via FMN and iron-sulfur (Fe-S) centers, to quinones in the respiratory chain. The immediate electron acceptor for the enzyme in this species is believed to be ubiquinone. Couples the redox reaction to proton translocation (for every two electrons transferred, four hydrogen ions are translocated across the cytoplasmic membrane), and thus conserves the redox energy in a proton gradient. The sequence is that of NADH-quinone oxidoreductase subunit K from Bartonella bacilliformis (strain ATCC 35685 / KC583 / Herrer 020/F12,63).